The chain runs to 529 residues: MSVKWTSVILLIQLSFYFSSGSCGKVLVWAAEYSHWMNMKTILEELVQRGHEVTALASSASILFDPNNSSALKIEVFPTSLPKPEFENIVTQEIKRWIELPKDTFWLYFSQMQEIMWKFGDIFRNFCKDVVSNKKLMKKLQESRFDVVFADPIFPCSELLAELFNIPLVYSLRFTPGYVFEKHCGGFLFPPSYVPVVMSELSDQMTFMERVKNMIYMLYFDFCFQIYDMKKWDQFYTEVLGRHTTLSEIMGKADIWLIRNSWNFQFPHPLLPNVDFIGGLLCKPAKPLPKEMEEFVQSSGENGVVVFTLGSMITNMKEERANVIASALAQIPQKVLWRFDGNKPDTLGVNTRLYKWIPQNDLLGHPKTKAFITHGGANGIYEAIYHGVPMVGIPLFADQPDNIAHMKTRGAAVQLDFDTMSSTDLVNALKTVINDPLYKENVMKLSRIQRDQPVKPLDRAVFWIEFVMRHKGAKHLRPAAHDLTWFQYHSFDVIGFLLACVATVIFIIMKCCLFCFWKFARKGKKGKSD.

A signal peptide spans 1–24; the sequence is MSVKWTSVILLIQLSFYFSSGSCG. 2 N-linked (GlcNAc...) asparagine glycosylation sites follow: asparagine 67 and asparagine 68. Residues 494 to 514 form a helical membrane-spanning segment; that stretch reads IGFLLACVATVIFIIMKCCLF.

This sequence belongs to the UDP-glycosyltransferase family. Expressed in several tissues, including the prostate, mammary gland, epididymis, testis and ovary.

It is found in the microsome membrane. The protein localises to the endoplasmic reticulum membrane. The catalysed reaction is glucuronate acceptor + UDP-alpha-D-glucuronate = acceptor beta-D-glucuronoside + UDP + H(+). Its function is as follows. UDPGTs are of major importance in the conjugation and subsequent elimination of potentially toxic xenobiotics and endogenous compounds. This isozyme has glucuronidating capacity on 6 steroids and the bile acid, hyodeoxycholic acid. May potentially play an important role in estrogen and androgen catabolism in peripheral steroid target tissues. The chain is UDP-glucuronosyltransferase 2B23 (UGT2B23) from Macaca fascicularis (Crab-eating macaque).